We begin with the raw amino-acid sequence, 277 residues long: Phosphate import ATP-binding protein PstB 2 (277 aa).

An ABC transporter domain is found at Ile31–Ile272. Gly63–Ser70 is an ATP binding site.

Belongs to the ABC transporter superfamily. Phosphate importer (TC 3.A.1.7) family. The complex is composed of two ATP-binding proteins (PstB), two transmembrane proteins (PstC and PstA) and a solute-binding protein (PstS).

Its subcellular location is the cell inner membrane. It catalyses the reaction phosphate(out) + ATP + H2O = ADP + 2 phosphate(in) + H(+). Its function is as follows. Part of the ABC transporter complex PstSACB involved in phosphate import. Responsible for energy coupling to the transport system. The protein is Phosphate import ATP-binding protein PstB 2 of Pseudomonas syringae pv. tomato (strain ATCC BAA-871 / DC3000).